The chain runs to 220 residues: Deoxyribose-phosphate aldolase (220 aa).

The Proton donor/acceptor role is filled by D89. The active-site Schiff-base intermediate with acetaldehyde is K151. K180 functions as the Proton donor/acceptor in the catalytic mechanism.

It belongs to the DeoC/FbaB aldolase family. DeoC type 1 subfamily.

The protein resides in the cytoplasm. It carries out the reaction 2-deoxy-D-ribose 5-phosphate = D-glyceraldehyde 3-phosphate + acetaldehyde. It participates in carbohydrate degradation; 2-deoxy-D-ribose 1-phosphate degradation; D-glyceraldehyde 3-phosphate and acetaldehyde from 2-deoxy-alpha-D-ribose 1-phosphate: step 2/2. In terms of biological role, catalyzes a reversible aldol reaction between acetaldehyde and D-glyceraldehyde 3-phosphate to generate 2-deoxy-D-ribose 5-phosphate. The sequence is that of Deoxyribose-phosphate aldolase from Lactococcus lactis subsp. cremoris (strain SK11).